Consider the following 377-residue polypeptide: MSNGIVIIGSGFAARQLVKNIRKQDACIPLTLIAADSMDEYNKPDLSHVISQRQRADDLTRQTAGEFAEQFNLHLFPHTWIMDIDAEAHVVKSQNNQWQYDKLVLATGASAFVPPVPGRELMLTLNSQQEYRACETQLRDARRVLIVGGGLIGSELAMDFCRAGKAVTLIDNAASILASLMPPEVSSRLQHRLTEMGVHLLLKSQLQGLEKTDSGILATLDRQRSIEVDAVIAATGLRPETALARRAGLTINRGVCVDSYLQTSNADIYALGDCTEINGQVLPFLQPIQLSAMVLAKNLLGNNTPLKLPAMLVKIKTPELPLHLAGETQRQDLRWQINTERQGMVARGVDDADQLRAFVVSEDRMKEAFGLLKTLPV.

Belongs to the FAD-dependent oxidoreductase family. FAD serves as cofactor.

The protein resides in the cytoplasm. The catalysed reaction is 2 reduced [nitric oxide reductase rubredoxin domain] + NAD(+) + H(+) = 2 oxidized [nitric oxide reductase rubredoxin domain] + NADH. The protein operates within nitrogen metabolism; nitric oxide reduction. Its function is as follows. One of at least two accessory proteins for anaerobic nitric oxide (NO) reductase. Reduces the rubredoxin moiety of NO reductase. The sequence is that of Nitric oxide reductase FlRd-NAD(+) reductase from Escherichia coli O17:K52:H18 (strain UMN026 / ExPEC).